Here is a 411-residue protein sequence, read N- to C-terminus: Argininosuccinate synthase (411 aa).

ATP is bound by residues 10-18 (AYSGGLDTS) and alanine 37. Residues tyrosine 89 and serine 94 each contribute to the L-citrulline site. Glycine 119 is an ATP binding site. Residues threonine 121, asparagine 125, and aspartate 126 each contribute to the L-aspartate site. Asparagine 125 contributes to the L-citrulline binding site. Arginine 129, serine 178, serine 187, glutamate 263, and tyrosine 275 together coordinate L-citrulline.

It belongs to the argininosuccinate synthase family. Type 1 subfamily. In terms of assembly, homotetramer.

Its subcellular location is the cytoplasm. It carries out the reaction L-citrulline + L-aspartate + ATP = 2-(N(omega)-L-arginino)succinate + AMP + diphosphate + H(+). It functions in the pathway amino-acid biosynthesis; L-arginine biosynthesis; L-arginine from L-ornithine and carbamoyl phosphate: step 2/3. The sequence is that of Argininosuccinate synthase from Aeromonas salmonicida (strain A449).